The primary structure comprises 405 residues: NADH-quinone oxidoreductase subunit D (405 aa).

Belongs to the complex I 49 kDa subunit family. NDH-1 is composed of 14 different subunits. Subunits NuoB, C, D, E, F, and G constitute the peripheral sector of the complex.

It localises to the cell inner membrane. The catalysed reaction is a quinone + NADH + 5 H(+)(in) = a quinol + NAD(+) + 4 H(+)(out). Its function is as follows. NDH-1 shuttles electrons from NADH, via FMN and iron-sulfur (Fe-S) centers, to quinones in the respiratory chain. The immediate electron acceptor for the enzyme in this species is believed to be ubiquinone. Couples the redox reaction to proton translocation (for every two electrons transferred, four hydrogen ions are translocated across the cytoplasmic membrane), and thus conserves the redox energy in a proton gradient. The sequence is that of NADH-quinone oxidoreductase subunit D from Afipia carboxidovorans (strain ATCC 49405 / DSM 1227 / KCTC 32145 / OM5) (Oligotropha carboxidovorans).